A 488-amino-acid chain; its full sequence is Gamma-aminobutyric acid receptor subunit beta-4 (488 aa).

The signal sequence occupies residues 1-25; the sequence is MWTFQADRLSGIVSALAALCVACCA. Over 26–244 the chain is Extracellular; it reads QSPSTGNISV…SFRIKRNIGY (219 aa). N-linked (GlcNAc...) asparagine glycosylation is found at asparagine 32, asparagine 104, asparagine 173, and asparagine 195. An intrachain disulfide couples cysteine 160 to cysteine 174. The next 3 helical transmembrane spans lie at 245–266, 271–292, and 304–326; these read FILQ…SFWI, SAAR…NTHL, and AIDV…YAFV. The Cytoplasmic segment spans residues 327–465; that stretch reads NYIFFGRGPR…DLTDVSTIDK (139 aa). The chain crosses the membrane as a helical span at residues 466–487; the sequence is WSRIIFPITFGFFNLVYWLYYV.

The protein belongs to the ligand-gated ion channel (TC 1.A.9) family. Gamma-aminobutyric acid receptor (TC 1.A.9.5) subfamily. GABRB4 sub-subfamily. As to quaternary structure, generally pentameric. There are five types of GABA(A) receptor chains: alpha, beta, gamma, delta, and rho.

Its subcellular location is the postsynaptic cell membrane. It is found in the cell membrane. GABA, the major inhibitory neurotransmitter in the vertebrate brain, mediates neuronal inhibition by binding to the GABA/benzodiazepine receptor and opening an integral chloride channel. This is Gamma-aminobutyric acid receptor subunit beta-4 (GABRB4) from Gallus gallus (Chicken).